The sequence spans 466 residues: Citrate synthase, mitochondrial (466 aa).

A mitochondrion-targeting transit peptide spans 1–27; that stretch reads MALLTAAARLLGTKNASCLVLAARHAS. An SIFI-degron motif is present at residues 2–21; the sequence is ALLTAAARLLGTKNASCLVL. K57 carries the N6-succinyllysine modification. K76 is subject to N6-acetyllysine; alternate. The residue at position 76 (K76) is an N6-succinyllysine; alternate. N6-succinyllysine is present on residues K103 and K193. H301 is a catalytic residue. 2 positions are modified to N6-acetyllysine; alternate: K321 and K327. N6-succinyllysine; alternate occurs at positions 321 and 327. H347 is an active-site residue. Residue R356 participates in oxaloacetate binding. At K375 the chain carries N6-acetyllysine; alternate. An N6-succinyllysine; alternate modification is found at K375. K382 bears the N6-acetyllysine mark. K393 bears the N6-acetyllysine; alternate mark. At K393 the chain carries N6-succinyllysine; alternate. Residue K395 is modified to N6,N6,N6-trimethyllysine. The active site involves D402. Residues R428 and R448 each coordinate oxaloacetate. K450 bears the N6-succinyllysine mark. K459 is modified (N6-acetyllysine; alternate). The residue at position 459 (K459) is an N6-succinyllysine; alternate.

The protein belongs to the citrate synthase family. As to quaternary structure, homodimer. Methylated. Trimethylation at Lys-395 by CSKMT decreases citrate synthase activity. Post-translationally, in response to mitochondrial stress, the precursor protein is ubiquitinated by the SIFI complex in the cytoplasm before mitochondrial import, leading to its degradation. Within the SIFI complex, UBR4 initiates ubiquitin chain that are further elongated or branched by KCMF1.

The protein localises to the mitochondrion matrix. The catalysed reaction is oxaloacetate + acetyl-CoA + H2O = citrate + CoA + H(+). The protein operates within carbohydrate metabolism; tricarboxylic acid cycle; isocitrate from oxaloacetate: step 1/2. In terms of biological role, key enzyme of the Krebs tricarboxylic acid cycle which catalyzes the synthesis of citrate from acetyl coenzyme A and oxaloacetate. The polypeptide is Citrate synthase, mitochondrial (CS) (Macaca fascicularis (Crab-eating macaque)).